We begin with the raw amino-acid sequence, 275 residues long: Translation initiation factor 2 subunit alpha (275 aa).

The 72-residue stretch at 12–83 folds into the S1 motif domain; that stretch reads GEFVVATVKN…EKGHIDLSLK (72 aa).

The protein belongs to the eIF-2-alpha family. Heterotrimer composed of an alpha, a beta and a gamma chain.

EIF-2 functions in the early steps of protein synthesis by forming a ternary complex with GTP and initiator tRNA. In Thermococcus kodakarensis (strain ATCC BAA-918 / JCM 12380 / KOD1) (Pyrococcus kodakaraensis (strain KOD1)), this protein is Translation initiation factor 2 subunit alpha.